We begin with the raw amino-acid sequence, 75 residues long: Peptide Ctri10036 (75 aa).

The N-terminal stretch at 1 to 22 (MNSKYLFVFLILNVIFIDLCQG) is a signal peptide. The residue at position 41 (Lys-41) is a Lysine amide. Residues 47 to 75 (ELGSQYDYLQDFRKRELDLDDLLSKFPDY) constitute a propeptide that is removed on maturation.

Belongs to the non-disulfide-bridged peptide (NDBP) superfamily. Short antimicrobial peptide (group 4) family. In terms of tissue distribution, expressed by the venom gland.

It is found in the secreted. The chain is Peptide Ctri10036 from Chaerilus tricostatus (Scorpion).